Consider the following 112-residue polypeptide: MKKIEAIIKPFKLDEVKEALQEVGLQGITVTEAKGFGRQKGHAELYRGAEYIVDFLPKVKIEIVIGDDLVERAIDAIRRAAQTGRIGDGKIFVSNIEEAIRIRTGESGLDAI.

Tyr-51 is modified (O-UMP-tyrosine).

It belongs to the P(II) protein family. As to quaternary structure, homotrimer.

Its function is as follows. In nitrogen-limiting conditions, when the ratio of Gln to 2-ketoglutarate decreases, P-II is uridylylated to P-II-UMP. P-II-UMP allows the deadenylation of glutamine synthetase (GS), thus activating the enzyme. Conversely, in nitrogen excess P-II is deuridylated and promotes the adenylation of GS. P-II indirectly controls the transcription of the GS gene (glnA). P-II prevents NR-II-catalyzed conversion of NR-I to NR-I-phosphate, the transcriptional activator of glnA. When P-II is uridylylated to P-II-UMP, these events are reversed. This chain is Nitrogen regulatory protein P-II (glnB), found in Bradyrhizobium diazoefficiens (strain JCM 10833 / BCRC 13528 / IAM 13628 / NBRC 14792 / USDA 110).